The primary structure comprises 78 residues: Translational regulator CsrA (78 aa).

This sequence belongs to the CsrA/RsmA family. In terms of assembly, homodimer; the beta-strands of each monomer intercalate to form a hydrophobic core, while the alpha-helices form wings that extend away from the core.

The protein resides in the cytoplasm. In terms of biological role, a translational regulator that binds mRNA to regulate translation initiation and/or mRNA stability. Usually binds in the 5'-UTR at or near the Shine-Dalgarno sequence preventing ribosome-binding, thus repressing translation. Its main target seems to be the major flagellin gene, while its function is anatagonized by FliW. In Nitratidesulfovibrio vulgaris (strain ATCC 29579 / DSM 644 / CCUG 34227 / NCIMB 8303 / VKM B-1760 / Hildenborough) (Desulfovibrio vulgaris), this protein is Translational regulator CsrA.